The sequence spans 374 residues: Mitochondrial inner membrane protein oxa1-1 (374 aa).

Residues 77 to 97 form a helical membrane-spanning segment; that stretch reads TINVYAGAPWWVSIILTTLGV. Residues 98–159 lie on the Mitochondrial intermembrane side of the membrane; it reads RLALTPVMIA…GIYLKHNVNP (62 aa). A helical transmembrane segment spans residues 160-180; that stretch reads FAIFILPLTQSAVFFSFFYAI. Over 181-242 the chain is Mitochondrial matrix; that stretch reads RKMSRLSVDG…TIGNSTNWRT (62 aa). The helical transmembrane segment at 243–263 threads the bilayer; it reads FFFLCCLLSPLLTAKLPAAIF. Over 264-374 the chain is Mitochondrial intermembrane; that stretch reads MYWIPSSLFN…SKKNSKKQSN (111 aa).

Belongs to the OXA1/ALB3/YidC family.

The protein localises to the mitochondrion inner membrane. Its function is as follows. Required for the insertion of integral membrane proteins into the mitochondrial inner membrane. Essential for the activity and assembly of cytochrome c oxidase. Not essential for viability, while oxa102 is essential. When both genes are deleted the cell is non-viable, suggesting that oxa101 act as a back-up for oxa102. The protein is Mitochondrial inner membrane protein oxa1-1 (oxa101) of Schizosaccharomyces pombe (strain 972 / ATCC 24843) (Fission yeast).